The primary structure comprises 55 residues: Small ribosomal subunit protein uS14 (55 aa).

The Zn(2+) site is built by cysteine 20, cysteine 23, cysteine 38, and cysteine 41.

Belongs to the universal ribosomal protein uS14 family. The cofactor is Zn(2+).

The protein is Small ribosomal subunit protein uS14 (rps29) of Dictyostelium discoideum (Social amoeba).